Here is a 191-residue protein sequence, read N- to C-terminus: MWPFSRQQNVSRILPIVPTAPRRFPVWFPAVLVLVLIALDQWLKAWALAHLQLNAPAIPVIPGVLDWELTFNTGAAWSMFSGSAVPLALGRILVGLGILSYLLWKPQGRFLTVVLSMIAAGAIGNSIDGLQRGQVTDMIHSPLLSAVTEAINGTRFPIFNIADMCVVGGTILLLVASLLPERKREKAVPEA.

Transmembrane regions (helical) follow at residues 26–46, 84–104, and 110–130; these read VWFPAVLVLVLIALDQWLKAW, AVPLALGRILVGLGILSYLLW, and FLTVVLSMIAAGAIGNSIDGL. Catalysis depends on residues Asp137 and Asp163. Residues 156–176 form a helical membrane-spanning segment; that stretch reads FPIFNIADMCVVGGTILLLVA.

The protein belongs to the peptidase A8 family.

It is found in the cell membrane. The enzyme catalyses Release of signal peptides from bacterial membrane prolipoproteins. Hydrolyzes -Xaa-Yaa-Zaa-|-(S,diacylglyceryl)Cys-, in which Xaa is hydrophobic (preferably Leu), and Yaa (Ala or Ser) and Zaa (Gly or Ala) have small, neutral side chains.. Its pathway is protein modification; lipoprotein biosynthesis (signal peptide cleavage). This protein specifically catalyzes the removal of signal peptides from prolipoproteins. The chain is Lipoprotein signal peptidase from Deinococcus radiodurans (strain ATCC 13939 / DSM 20539 / JCM 16871 / CCUG 27074 / LMG 4051 / NBRC 15346 / NCIMB 9279 / VKM B-1422 / R1).